The following is a 135-amino-acid chain: Large ribosomal subunit protein uL16c (135 aa).

It belongs to the universal ribosomal protein uL16 family. As to quaternary structure, part of the 50S ribosomal subunit.

Its subcellular location is the plastid. It is found in the chloroplast. The chain is Large ribosomal subunit protein uL16c from Eucalyptus globulus subsp. globulus (Tasmanian blue gum).